Reading from the N-terminus, the 541-residue chain is Beta-hexosaminidase subunit A2 (541 aa).

An N-terminal signal peptide occupies residues 1–21; it reads MINKFLTIFLIFSIVIIKVLS. Glu-314 functions as the Proton donor in the catalytic mechanism. Residues Asn-322, Asn-336, Asn-356, Asn-435, and Asn-483 are each glycosylated (N-linked (GlcNAc...) asparagine).

It belongs to the glycosyl hydrolase 20 family.

It localises to the lysosome. It carries out the reaction Hydrolysis of terminal non-reducing N-acetyl-D-hexosamine residues in N-acetyl-beta-D-hexosaminides.. Responsible for the degradation of GM2 gangliosides, and a variety of other molecules containing terminal N-acetyl hexosamines. In Dictyostelium discoideum (Social amoeba), this protein is Beta-hexosaminidase subunit A2 (hexa2).